Here is a 189-residue protein sequence, read N- to C-terminus: Elongation factor P (189 aa).

It belongs to the elongation factor P family.

Its subcellular location is the cytoplasm. The protein operates within protein biosynthesis; polypeptide chain elongation. Functionally, involved in peptide bond synthesis. Stimulates efficient translation and peptide-bond synthesis on native or reconstituted 70S ribosomes in vitro. Probably functions indirectly by altering the affinity of the ribosome for aminoacyl-tRNA, thus increasing their reactivity as acceptors for peptidyl transferase. This is Elongation factor P from Pseudomonas entomophila (strain L48).